Here is a 212-residue protein sequence, read N- to C-terminus: Probable GTP-binding protein EngB (212 aa).

In terms of domain architecture, EngB-type G spans serine 38–proline 210. Residues glycine 46 to serine 53, glycine 73 to glutamine 77, aspartate 91 to glycine 94, threonine 158 to aspartate 161, and valine 189 to asparagine 191 each bind GTP. Mg(2+) is bound by residues serine 53 and threonine 75.

Belongs to the TRAFAC class TrmE-Era-EngA-EngB-Septin-like GTPase superfamily. EngB GTPase family. Requires Mg(2+) as cofactor.

Functionally, necessary for normal cell division and for the maintenance of normal septation. The polypeptide is Probable GTP-binding protein EngB (Rickettsia conorii (strain ATCC VR-613 / Malish 7)).